We begin with the raw amino-acid sequence, 164 residues long: UPF0225 protein Shewana3_2159 (164 aa).

The protein belongs to the UPF0225 family.

The polypeptide is UPF0225 protein Shewana3_2159 (Shewanella sp. (strain ANA-3)).